A 594-amino-acid polypeptide reads, in one-letter code: 3-hydroxy-3-methylglutaryl coenzyme A reductase 2-A (594 aa).

The tract at residues 1–32 (MDVRRRPVKSLSSAKTATAGEPPKSQQQHPKA) is disordered. The Lumenal portion of the chain corresponds to 1 to 37 (MDVRRRPVKSLSSAKTATAGEPPKSQQQHPKASDALP). A helical membrane pass occupies residues 38-58 (LPLYLTNGLFFTMFFSVMYFL). Over 59 to 81 (LHRWREKIRNSTPLHVVTLSELA) the chain is Cytoplasmic. A helical membrane pass occupies residues 82 to 102 (ALVLLMASVIYLLGFFGIGFV). The Lumenal segment spans residues 103–549 (RSVIRPSPDA…SKESPGSNSR (447 aa)). Asn261 is a glycosylation site (N-linked (GlcNAc...) asparagine). Catalysis depends on Glu273, which acts as the Charge relay system. Asn337 is a glycosylation site (N-linked (GlcNAc...) asparagine). Active-site charge relay system residues include Lys405 and Asp481. Residues 550-570 (LLASIVAGSVLAGELSLMSAL) form a helical membrane-spanning segment. The Cytoplasmic portion of the chain corresponds to 571–594 (AAGQLVKSHMKYNRSSKDITKLSS). Residue His579 is the Proton donor of the active site.

Belongs to the HMG-CoA reductase family. Mostly expressed in the petioles of seedlings, seedlings and roots, and, to a lower extent, in seeds, leaves, stems and flowers.

Its subcellular location is the endoplasmic reticulum membrane. It localises to the plastid. The protein localises to the chloroplast membrane. It is found in the peroxisome membrane. It carries out the reaction (R)-mevalonate + 2 NADP(+) + CoA = (3S)-3-hydroxy-3-methylglutaryl-CoA + 2 NADPH + 2 H(+). It participates in metabolic intermediate biosynthesis; (R)-mevalonate biosynthesis; (R)-mevalonate from acetyl-CoA: step 3/3. With respect to regulation, competitive inhibition by mevinolin (Mev) is leading to a significant reduction of total ginsenoside in adventitious roots. Triggered by darkness. Catalyzes the synthesis of mevalonate, the specific precursor of all isoprenoid compounds present in plants. Component of the triterpene saponins (e.g. ginsenosides or panaxosides) and phytosterols biosynthetic pathways. The sequence is that of 3-hydroxy-3-methylglutaryl coenzyme A reductase 2-A from Panax ginseng (Korean ginseng).